The chain runs to 59 residues: Large ribosomal subunit protein uL30 (59 aa).

The protein belongs to the universal ribosomal protein uL30 family. In terms of assembly, part of the 50S ribosomal subunit.

The protein is Large ribosomal subunit protein uL30 of Ruminiclostridium cellulolyticum (strain ATCC 35319 / DSM 5812 / JCM 6584 / H10) (Clostridium cellulolyticum).